The chain runs to 169 residues: Probable calcium-binding protein CML20 (169 aa).

A disordered region spans residues 1–23 (MSSIYRTVSRKEKPRRHHGLTTQ). EF-hand domains follow at residues 23 to 58 (QKKQ…LGFE), 59 to 94 (MTEE…KIGE), 96 to 131 (DTKE…LGEN), and 132 to 167 (FTDA…TAYG). Ca(2+) is bound by residues Asp36, Asp38, Ser40, Thr42, Glu47, Asp72, Asp74, Ser76, Glu83, Asp109, Asp111, Asn113, Lys115, Asp120, Asp145, Asp147, Asp149, Glu151, and Glu156.

In terms of assembly, interacts with TON1A and TON1B. Interacts with SAC3A and SAC3B. Interacts with UCH1 and UCH2.

Potential calcium sensor. The polypeptide is Probable calcium-binding protein CML20 (Arabidopsis thaliana (Mouse-ear cress)).